The following is a 177-amino-acid chain: CRIB domain-containing protein RIC8 (177 aa).

The CRIB domain maps to 17 to 30 (IGTPTDVKHVAHIG). The segment covering 72–89 (STRSRDIPRLPKSSRERS) has biased composition (basic and acidic residues). The segment at 72-177 (STRSRDIPRL…SSTSDAGYLT (106 aa)) is disordered. The segment covering 158 to 171 (GSQVESISDSSSTS) has biased composition (low complexity).

Functionally, functions as a downstream effector of Rho-related GTP binding proteins of the 'Rho of Plants' (ROPs) family. Participates in the propagation of ROP GTPase signals in specific cellular responses. In Arabidopsis thaliana (Mouse-ear cress), this protein is CRIB domain-containing protein RIC8 (RIC8).